A 402-amino-acid chain; its full sequence is Arginine biosynthesis bifunctional protein ArgJ (402 aa).

Residues threonine 149, lysine 175, threonine 186, glutamate 266, asparagine 397, and threonine 402 each coordinate substrate. The active-site Nucleophile is the threonine 186.

This sequence belongs to the ArgJ family. In terms of assembly, heterotetramer of two alpha and two beta chains.

The protein localises to the cytoplasm. It carries out the reaction N(2)-acetyl-L-ornithine + L-glutamate = N-acetyl-L-glutamate + L-ornithine. The enzyme catalyses L-glutamate + acetyl-CoA = N-acetyl-L-glutamate + CoA + H(+). It functions in the pathway amino-acid biosynthesis; L-arginine biosynthesis; L-ornithine and N-acetyl-L-glutamate from L-glutamate and N(2)-acetyl-L-ornithine (cyclic): step 1/1. Its pathway is amino-acid biosynthesis; L-arginine biosynthesis; N(2)-acetyl-L-ornithine from L-glutamate: step 1/4. Its function is as follows. Catalyzes two activities which are involved in the cyclic version of arginine biosynthesis: the synthesis of N-acetylglutamate from glutamate and acetyl-CoA as the acetyl donor, and of ornithine by transacetylation between N(2)-acetylornithine and glutamate. The chain is Arginine biosynthesis bifunctional protein ArgJ from Prochlorococcus marinus subsp. pastoris (strain CCMP1986 / NIES-2087 / MED4).